Reading from the N-terminus, the 327-residue chain is Phenylalanine--tRNA ligase alpha subunit (327 aa).

Glu252 serves as a coordination point for Mg(2+).

It belongs to the class-II aminoacyl-tRNA synthetase family. Phe-tRNA synthetase alpha subunit type 1 subfamily. In terms of assembly, tetramer of two alpha and two beta subunits. Requires Mg(2+) as cofactor.

The protein resides in the cytoplasm. The enzyme catalyses tRNA(Phe) + L-phenylalanine + ATP = L-phenylalanyl-tRNA(Phe) + AMP + diphosphate + H(+). This chain is Phenylalanine--tRNA ligase alpha subunit, found in Erwinia tasmaniensis (strain DSM 17950 / CFBP 7177 / CIP 109463 / NCPPB 4357 / Et1/99).